The primary structure comprises 122 residues: Fluoride-specific ion channel FluC (122 aa).

A run of 4 helical transmembrane segments spans residues 4–24 (LAVL…SIFI), 33–53 (LGTM…SIYL), 66–86 (LLIT…LEGI), and 95–115 (LKAF…VALG). Residues G73 and T76 each contribute to the Na(+) site.

Belongs to the fluoride channel Fluc/FEX (TC 1.A.43) family.

The protein resides in the cell inner membrane. It carries out the reaction fluoride(in) = fluoride(out). Na(+) is not transported, but it plays an essential structural role and its presence is essential for fluoride channel function. Fluoride-specific ion channel. Important for reducing fluoride concentration in the cell, thus reducing its toxicity. The sequence is that of Fluoride-specific ion channel FluC from Hydrogenobaculum sp. (strain Y04AAS1).